Here is a 292-residue protein sequence, read N- to C-terminus: Phosphatidylglycerol--prolipoprotein diacylglyceryl transferase (292 aa).

The next 6 membrane-spanning stretches (helical) occupy residues 25 to 45 (IALHWYGLGYVVGILFAWWYA), 70 to 90 (FVVWSAISVVVGGRLGQVLVW), 101 to 121 (AIIAVWDGGMSFHGGFIGIII), 138 to 158 (FDIVAAGAPIGIGIVRICNFI), 193 to 213 (FMEGFLLFIILFIIIFAFKAL), and 255 to 275 (GFTYGMALSLPMLFFGIYLLL). An a 1,2-diacyl-sn-glycero-3-phospho-(1'-sn-glycerol)-binding site is contributed by Arg153.

The protein belongs to the Lgt family.

The protein resides in the cell inner membrane. It catalyses the reaction L-cysteinyl-[prolipoprotein] + a 1,2-diacyl-sn-glycero-3-phospho-(1'-sn-glycerol) = an S-1,2-diacyl-sn-glyceryl-L-cysteinyl-[prolipoprotein] + sn-glycerol 1-phosphate + H(+). It participates in protein modification; lipoprotein biosynthesis (diacylglyceryl transfer). Catalyzes the transfer of the diacylglyceryl group from phosphatidylglycerol to the sulfhydryl group of the N-terminal cysteine of a prolipoprotein, the first step in the formation of mature lipoproteins. This Bartonella quintana (strain Toulouse) (Rochalimaea quintana) protein is Phosphatidylglycerol--prolipoprotein diacylglyceryl transferase.